Here is a 510-residue protein sequence, read N- to C-terminus: Probable cytosol aminopeptidase (510 aa).

Mn(2+) contacts are provided by lysine 272 and aspartate 277. Lysine 284 is a catalytic residue. Mn(2+)-binding residues include aspartate 296, aspartate 355, and glutamate 357. The active site involves arginine 359.

The protein belongs to the peptidase M17 family. Mn(2+) serves as cofactor.

Its subcellular location is the cytoplasm. It catalyses the reaction Release of an N-terminal amino acid, Xaa-|-Yaa-, in which Xaa is preferably Leu, but may be other amino acids including Pro although not Arg or Lys, and Yaa may be Pro. Amino acid amides and methyl esters are also readily hydrolyzed, but rates on arylamides are exceedingly low.. The enzyme catalyses Release of an N-terminal amino acid, preferentially leucine, but not glutamic or aspartic acids.. In terms of biological role, presumably involved in the processing and regular turnover of intracellular proteins. Catalyzes the removal of unsubstituted N-terminal amino acids from various peptides. In Synechococcus sp. (strain JA-2-3B'a(2-13)) (Cyanobacteria bacterium Yellowstone B-Prime), this protein is Probable cytosol aminopeptidase.